A 427-amino-acid polypeptide reads, in one-letter code: UDP-N-acetylglucosamine 1-carboxyvinyltransferase 1 (427 aa).

Phosphoenolpyruvate is bound at residue 24–25; the sequence is KN. A UDP-N-acetyl-alpha-D-glucosamine-binding site is contributed by Arg-97. The active-site Proton donor is Cys-121. At Cys-121 the chain carries 2-(S-cysteinyl)pyruvic acid O-phosphothioketal. UDP-N-acetyl-alpha-D-glucosamine is bound by residues 126-130, Asp-309, and Val-331; that span reads RPIDL.

It belongs to the EPSP synthase family. MurA subfamily.

It localises to the cytoplasm. It catalyses the reaction phosphoenolpyruvate + UDP-N-acetyl-alpha-D-glucosamine = UDP-N-acetyl-3-O-(1-carboxyvinyl)-alpha-D-glucosamine + phosphate. It functions in the pathway cell wall biogenesis; peptidoglycan biosynthesis. Cell wall formation. Adds enolpyruvyl to UDP-N-acetylglucosamine. In Lactococcus lactis subsp. lactis (strain IL1403) (Streptococcus lactis), this protein is UDP-N-acetylglucosamine 1-carboxyvinyltransferase 1.